A 106-amino-acid polypeptide reads, in one-letter code: Small ribosomal subunit protein uS10 (106 aa).

Belongs to the universal ribosomal protein uS10 family. Part of the 30S ribosomal subunit.

In terms of biological role, involved in the binding of tRNA to the ribosomes. This Synechococcus sp. (strain RCC307) protein is Small ribosomal subunit protein uS10.